The sequence spans 286 residues: 4-hydroxybenzoate octaprenyltransferase (286 aa).

Transmembrane regions (helical) follow at residues 21–40 (GTLLLLWPCLMALVLAAGGM), 96–116 (LFVILGLAAFGLVLLLNGLVV), 142–162 (FLGVVWSWSIPMAYAAQTGEV), 167–187 (WWLFAANWFWTVAYDTMYAMV), 210–230 (QIIGLFQFAALLCFIAAGWSA), 235–255 (LYGLGLLTFVGFSTYQQMLIF), and 266–286 (FLNNNWAGLALFVGLGADYLF).

Belongs to the UbiA prenyltransferase family. The cofactor is Mg(2+).

Its subcellular location is the cell inner membrane. It carries out the reaction all-trans-octaprenyl diphosphate + 4-hydroxybenzoate = 4-hydroxy-3-(all-trans-octaprenyl)benzoate + diphosphate. It functions in the pathway cofactor biosynthesis; ubiquinone biosynthesis. Catalyzes the prenylation of para-hydroxybenzoate (PHB) with an all-trans polyprenyl group. Mediates the second step in the final reaction sequence of ubiquinone-8 (UQ-8) biosynthesis, which is the condensation of the polyisoprenoid side chain with PHB, generating the first membrane-bound Q intermediate 3-octaprenyl-4-hydroxybenzoate. In Shewanella sp. (strain MR-4), this protein is 4-hydroxybenzoate octaprenyltransferase.